A 201-amino-acid polypeptide reads, in one-letter code: Holliday junction branch migration complex subunit RuvA (201 aa).

Residues 1–63 (MIAYLSGVVR…EDAQLLFGFP (63 aa)) are domain I. The tract at residues 64 to 142 (DADHLKLFDL…EHLAAAASGA (79 aa)) is domain II. A flexible linker region spans residues 143–150 (AGGKRPAR). Positions 151–201 (VSSTAGHDAVDALLALGFREAQVRAAVAELLGADPEASADTLIRKALGRLR) are domain III.

Belongs to the RuvA family. In terms of assembly, homotetramer. Forms an RuvA(8)-RuvB(12)-Holliday junction (HJ) complex. HJ DNA is sandwiched between 2 RuvA tetramers; dsDNA enters through RuvA and exits via RuvB. An RuvB hexamer assembles on each DNA strand where it exits the tetramer. Each RuvB hexamer is contacted by two RuvA subunits (via domain III) on 2 adjacent RuvB subunits; this complex drives branch migration. In the full resolvosome a probable DNA-RuvA(4)-RuvB(12)-RuvC(2) complex forms which resolves the HJ.

The protein resides in the cytoplasm. Functionally, the RuvA-RuvB-RuvC complex processes Holliday junction (HJ) DNA during genetic recombination and DNA repair, while the RuvA-RuvB complex plays an important role in the rescue of blocked DNA replication forks via replication fork reversal (RFR). RuvA specifically binds to HJ cruciform DNA, conferring on it an open structure. The RuvB hexamer acts as an ATP-dependent pump, pulling dsDNA into and through the RuvAB complex. HJ branch migration allows RuvC to scan DNA until it finds its consensus sequence, where it cleaves and resolves the cruciform DNA. The chain is Holliday junction branch migration complex subunit RuvA from Deinococcus radiodurans (strain ATCC 13939 / DSM 20539 / JCM 16871 / CCUG 27074 / LMG 4051 / NBRC 15346 / NCIMB 9279 / VKM B-1422 / R1).